Here is a 98-residue protein sequence, read N- to C-terminus: MLPIHLNLTVAFFLALAGVLIYRSHLMSTLLCLEGMMLSLFILMALMITHFQVFSVSMIPLILLVFSACEAGVGLALLVKISTTHGNDYIQNLNLLQC.

A run of 3 helical transmembrane segments spans residues Met1–Ile21, Thr29–Thr49, and Ile59–Val79.

This sequence belongs to the complex I subunit 4L family. As to quaternary structure, core subunit of respiratory chain NADH dehydrogenase (Complex I) which is composed of 45 different subunits.

It localises to the mitochondrion inner membrane. The catalysed reaction is a ubiquinone + NADH + 5 H(+)(in) = a ubiquinol + NAD(+) + 4 H(+)(out). Core subunit of the mitochondrial membrane respiratory chain NADH dehydrogenase (Complex I) which catalyzes electron transfer from NADH through the respiratory chain, using ubiquinone as an electron acceptor. Part of the enzyme membrane arm which is embedded in the lipid bilayer and involved in proton translocation. The chain is NADH-ubiquinone oxidoreductase chain 4L (MT-ND4L) from Phascogale tapoatafa (Common wambenger).